The sequence spans 269 residues: Undecaprenyl-diphosphatase (269 aa).

A run of 6 helical transmembrane segments spans residues 43-63 (KGKV…CWEY), 82-102 (FILN…LLHG), 108-128 (LFSS…ILLV), 188-208 (ATEF…FYDV), 222-242 (MFAV…KTLI), and 249-269 (DFKG…AYYW).

The protein belongs to the UppP family.

It localises to the cell inner membrane. It carries out the reaction di-trans,octa-cis-undecaprenyl diphosphate + H2O = di-trans,octa-cis-undecaprenyl phosphate + phosphate + H(+). Functionally, catalyzes the dephosphorylation of undecaprenyl diphosphate (UPP). Confers resistance to bacitracin. The sequence is that of Undecaprenyl-diphosphatase from Methylobacillus flagellatus (strain ATCC 51484 / DSM 6875 / VKM B-1610 / KT).